Consider the following 281-residue polypeptide: Cis-2,3-dihydrobiphenyl-2,3-diol dehydrogenase (281 aa).

10–34 (ITGGASGLGRALVDRFVAEGARVAV) contacts NAD(+). Residue Ser-142 coordinates substrate. Tyr-155 (proton acceptor) is an active-site residue.

It belongs to the short-chain dehydrogenases/reductases (SDR) family. In terms of assembly, homotetramer.

It carries out the reaction (2R,3S)-3-phenylcyclohexa-3,5-diene-1,2-diol + NAD(+) = biphenyl-2,3-diol + NADH + H(+). It functions in the pathway xenobiotic degradation; biphenyl degradation; 2-hydroxy-2,4-pentadienoate and benzoate from biphenyl: step 2/4. The polypeptide is Cis-2,3-dihydrobiphenyl-2,3-diol dehydrogenase (bphB) (Comamonas testosteroni (Pseudomonas testosteroni)).